The sequence spans 184 residues: Peptidyl-tRNA hydrolase (184 aa).

Residue Y14 participates in tRNA binding. Residue H19 is the Proton acceptor of the active site. 2 residues coordinate tRNA: F60 and N62.

It belongs to the PTH family. In terms of assembly, monomer.

Its subcellular location is the cytoplasm. The catalysed reaction is an N-acyl-L-alpha-aminoacyl-tRNA + H2O = an N-acyl-L-amino acid + a tRNA + H(+). Its function is as follows. Hydrolyzes ribosome-free peptidyl-tRNAs (with 1 or more amino acids incorporated), which drop off the ribosome during protein synthesis, or as a result of ribosome stalling. Functionally, catalyzes the release of premature peptidyl moieties from peptidyl-tRNA molecules trapped in stalled 50S ribosomal subunits, and thus maintains levels of free tRNAs and 50S ribosomes. The chain is Peptidyl-tRNA hydrolase from Mesomycoplasma hyopneumoniae (strain 7448) (Mycoplasma hyopneumoniae).